Consider the following 331-residue polypeptide: Putative heat stress transcription factor A-6a (331 aa).

Residues 135–160 (RRGAGTGSTTPRAVNCGGGGGEGEVE) are disordered. Positions 156–238 (EGEVERLRRD…VERKKRRMLA (83 aa)) form a coiled coil. The segment at 162-212 (LRRDKEALARELARLRRQQQEARAQLLDMERRVRGTERRQEQCTEFLARAL) is hydrophobic repeat HR-A/B. Positions 230-235 (ERKKRR) match the Nuclear localization signal motif. The Nuclear export signal signature appears at 246-253 (LTFEALAL). The AHA1 signature appears at 270–279 (DMIWYELLGE). Positions 305 to 313 (AEPWEEMGE) match the AHA2 motif.

This sequence belongs to the HSF family. Class A subfamily. As to quaternary structure, homotrimer. Exhibits temperature-dependent phosphorylation.

It localises to the cytoplasm. Its subcellular location is the nucleus. Its function is as follows. Transcriptional regulator that specifically binds DNA of heat shock promoter elements (HSE). In Oryza sativa subsp. japonica (Rice), this protein is Putative heat stress transcription factor A-6a (HSFA6A).